The primary structure comprises 736 residues: Segment polarity protein dishevelled homolog DVL-2 (736 aa).

The region spanning 1–82 is the DIX domain; that stretch reads MAETKVIYHL…RVVSWLASSE (82 aa). Residues 79-241 form a disordered region; the sequence is ASSEGSQPDS…PRLERTSSFS (163 aa). Residues 100–114 show a composition bias toward pro residues; that stretch reads EPPPPVPPPIPPPPA. Basic and acidic residues predominate over residues 149 to 160; it reads MRRDRVRRRESS. Residues 181–195 are compositionally biased toward low complexity; that stretch reads ESSSTLLTSEIETSI. Residues 205–217 are compositionally biased toward polar residues; it reads SRFSSSTEQSSAS. Residues 219 to 231 show a composition bias toward basic residues; that stretch reads LLKRHRRRRKQRP. The 73-residue stretch at 254–326 folds into the PDZ domain; the sequence is TVTLNMEKYN…NDDAVRVLRD (73 aa). The interaction with custos stretch occupies residues 327–427; the sequence is IVHKPGPIVL…LASVVKVMAS (101 aa). The DEP domain occupies 428-502; it reads PESGLEVRDR…SEQCYYIFGD (75 aa). 2 stretches are compositionally biased toward low complexity: residues 574-593 and 616-629; these read MGSAGSQHSEGSRSSGSNRS and KSGSGSESEYSTRS. A disordered region spans residues 574–664; it reads MGSAGSQHSE…HPPSVHSYAA (91 aa).

This sequence belongs to the DSH family. Can form homomultimers. Interacts with prickle1. Interacts (via PDZ domain) with ccdc88c/dal and dact1-B/dpr. Interacts (via DIX domain) with ARP/Axin-related protein and dact1-A/frodo. Interacts with sdc4, possibly via fz7. Interacts directly (via DEP domain) with efnb1/ephrin-B1 and indirectly with the phosphorylated ephrin receptors ephb1 and ephb2, via association with SH domain-containing adapters. May interact with lrrc6. Interacts with custos (via NLS1 and NLS2); the interaction is negatively regulated by Wnt stimulation. Post-translationally, phosphorylated. Phosphorylation is controlled by frizzled proteins, correlates with the onset of embryo dorsalizing events and is higher in the dorsal half of early cleavage embryos. Phosphorylated on tyrosine residues in response to association with efnb1/ephrin-B1. Expressed equally in both animal-vegetal and dorsal-ventral directions of the early blastula. Becomes enriched on the dorsal side of the embryo after cortical rotation. Expressed along the anterior margin of eye field of neurulae (stage 16 embryos) and in the anterolateral crescent that borders the eye field. Continues to be expressed in the optic cup at stage 26. Expressed in the central nervous system throughout the early tailbud stage including the entire hindbrain.

The protein resides in the cytoplasm. It is found in the cytoplasmic vesicle. It localises to the cell projection. Its subcellular location is the cilium. The protein localises to the nucleus. The protein resides in the cell membrane. Functionally, involved in at least 2 independent signaling cascades, controlling cell fate via canonical Wnt signaling and cell polarity via a planar cell polarity (PCP) cascade. Acts synergistically with dal/dapple-like to activate Wnt signaling, stabilizing ctnnb1/beta-catenin and leading to dorsal axis formation. Also prevents degradation of ctnnb1/beta-catenin by displacing gsk3 from a complex with ARP/Axin-related protein. Has an additional role in anterior-posterior (A/P) axis formation, specifying different neuroectodermal cell fates along the A/P axis in a dose-dependent manner by activating several early patterning genes. In the PCP pathway, required at the cell membrane for PCP-mediated neural and mesodermal convergent extension during gastrulation and subsequent neural tube closure, acting to activate jnk. Also involved in blastopore closure and archenteron elongation during early, but not late, gastrulation. Associates with ephrin receptors and ligands and acts as part of a downstream PCP pathway to mediate ephrin-mediated cell repulsion via activation of rhoa. Required for efnb1/ephrin-B1-driven movement of non-retinal progenitor cells into the retina during eye field formation. Patterns the hindbrain. Required for ciliogenesis. Controls the docking of basal bodies to the apical plasma membrane; mediates the activation, but not localization of rhoa at the apical surface of ciliated cells during basal body docking. Furthermore, required for the association of basal bodies with membrane-bound vesicles and the vesicle-trafficking protein exoc4/sec8, and this association is in turn required for basal body docking. Once basal bodies are docked, required for the planar polarization of basal bodies that underlies ciliary beating and the directional fluid flow across ciliated epithelia. The sequence is that of Segment polarity protein dishevelled homolog DVL-2 (dvl2) from Xenopus laevis (African clawed frog).